Here is a 575-residue protein sequence, read N- to C-terminus: Alpha-(1,6)-fucosyltransferase (575 aa).

The Cytoplasmic portion of the chain corresponds to 1–9; that stretch reads MRPWTGSWR. A helical; Signal-anchor for type II membrane protein transmembrane segment spans residues 10–30; it reads WIMLILFAWGTLLFYIGGHLV. Residues 31 to 575 are Lumenal-facing; that stretch reads RDNDHSDHSS…KYPTYPEADK (545 aa). 3 cysteine pairs are disulfide-bonded: cysteine 204-cysteine 266, cysteine 212-cysteine 230, and cysteine 218-cysteine 222. One can recognise a GT23 domain in the interval 206-493; that stretch reads KAKKLVCNIN…PDASANFRSL (288 aa). A Phosphoserine modification is found at serine 278. The SH3-binding motif lies at 299–305; sequence PRPPYLP. An important for donor substrate binding region spans residues 365–366; it reads RR. A disulfide bond links cysteine 465 and cysteine 472. In terms of domain architecture, SH3 spans 502-563; sequence PNAHNQIAIY…PSYKVREKIE (62 aa).

Belongs to the glycosyltransferase 23 family. Post-translationally, tyrosine phosphorylated by PKDCC/VLK. In terms of tissue distribution, highest expression in brain.

It is found in the golgi apparatus. Its subcellular location is the golgi stack membrane. It carries out the reaction N(4)-{beta-D-GlcNAc-(1-&gt;2)-alpha-D-Man-(1-&gt;3)-[beta-D-GlcNAc-(1-&gt;2)-alpha-D-Man-(1-&gt;6)]-beta-D-Man-(1-&gt;4)-beta-D-GlcNAc-(1-&gt;4)-beta-D-GlcNAc}-L-asparaginyl-[protein] + GDP-beta-L-fucose = an N(4)-{beta-D-GlcNAc-(1-&gt;2)-alpha-D-Man-(1-&gt;3)-[beta-D-GlcNAc-(1-&gt;2)-alpha-D-Man-(1-&gt;6)]-beta-D-Man-(1-&gt;4)-beta-D-GlcNAc-(1-&gt;4)-[alpha-L-Fuc-(1-&gt;6)]-beta-D-GlcNAc}-L-asparaginyl-[protein] + GDP + H(+). It participates in protein modification; protein glycosylation. Functionally, catalyzes the addition of fucose in alpha 1-6 linkage to the first GlcNAc residue, next to the peptide chains in N-glycans. This chain is Alpha-(1,6)-fucosyltransferase (FUT8), found in Sus scrofa (Pig).